The following is a 459-amino-acid chain: Serine protease HTRA3 (459 aa).

Residues 1-23 form the signal peptide; it reads MQARALLPATLATLATLAVSVLA. An IGFBP N-terminal domain is found at 27 to 90; it reads PAAPCPARCD…ECVRGVCRCR (64 aa). Cystine bridges form between Cys31–Cys54, Cys35–Cys56, Cys40–Cys57, Cys45–Cys60, Cys68–Cys82, Cys76–Cys87, Cys89–Cys107, and Cys96–Cys132. Positions 76 to 134 constitute a Kazal-like domain; the sequence is CGDSLECVRGVCRCRWTHTVCGTDGHTYADVCALQAASRRALQISGTPVRQLQKGACPS. A serine protease region spans residues 181 to 346; that stretch reads GSGFIMSEAG…AIPSDRITRF (166 aa). Catalysis depends on charge relay system residues His197, Asp233, and Ser311. In terms of domain architecture, PDZ spans 365–450; the sequence is IRMRTITPSL…EVRRGNDDLL (86 aa).

The protein belongs to the peptidase S1C family. As to quaternary structure, homotrimer. Interacts with TGFB1; the interaction inhibits TGFB-mediated signaling. Interacts with BMP4; the interaction inhibits BMP4-mediated signaling. Interacts with TGFB2, GDF5 and MYH9. In terms of tissue distribution, expressed in the ovary, essentially in granulosa cells in a follicle-stage specific manner. Highest levels found in large luteinizing granulosa cells.

It localises to the secreted. Functionally, serine protease that cleaves beta-casein/CSN2 as well as several extracellular matrix (ECM) proteoglycans such as decorin/DCN, biglycan/BGN and fibronectin/FN1. Inhibits signaling mediated by TGF-beta family proteins possibly indirectly by degradation of these ECM proteoglycans. May act as a tumor suppressor. Negatively regulates, in vitro, trophoblast invasion during placental development and may be involved in the development of the placenta in vivo. May also have a role in ovarian development, granulosa cell differentiation and luteinization. The sequence is that of Serine protease HTRA3 (Htra3) from Rattus norvegicus (Rat).